A 317-amino-acid chain; its full sequence is Aspartate carbamoyltransferase catalytic subunit (317 aa).

Arg64 and Thr65 together coordinate carbamoyl phosphate. Lys92 is a binding site for L-aspartate. Carbamoyl phosphate is bound by residues Arg114, His142, and Gln145. 2 residues coordinate L-aspartate: Arg176 and Arg230. 2 residues coordinate carbamoyl phosphate: Gly271 and Pro272.

It belongs to the aspartate/ornithine carbamoyltransferase superfamily. ATCase family. As to quaternary structure, heterododecamer (2C3:3R2) of six catalytic PyrB chains organized as two trimers (C3), and six regulatory PyrI chains organized as three dimers (R2).

The enzyme catalyses carbamoyl phosphate + L-aspartate = N-carbamoyl-L-aspartate + phosphate + H(+). It participates in pyrimidine metabolism; UMP biosynthesis via de novo pathway; (S)-dihydroorotate from bicarbonate: step 2/3. Catalyzes the condensation of carbamoyl phosphate and aspartate to form carbamoyl aspartate and inorganic phosphate, the committed step in the de novo pyrimidine nucleotide biosynthesis pathway. The chain is Aspartate carbamoyltransferase catalytic subunit from Nitratidesulfovibrio vulgaris (strain ATCC 29579 / DSM 644 / CCUG 34227 / NCIMB 8303 / VKM B-1760 / Hildenborough) (Desulfovibrio vulgaris).